The primary structure comprises 426 residues: Serine hydroxymethyltransferase (426 aa).

Residues leucine 113 and 117–119 contribute to the (6S)-5,6,7,8-tetrahydrofolate site; that span reads GHL. The residue at position 222 (lysine 222) is an N6-(pyridoxal phosphate)lysine. A (6S)-5,6,7,8-tetrahydrofolate-binding site is contributed by 363-365; the sequence is SAF.

Belongs to the SHMT family. As to quaternary structure, homodimer. Requires pyridoxal 5'-phosphate as cofactor.

The protein localises to the cytoplasm. The enzyme catalyses (6R)-5,10-methylene-5,6,7,8-tetrahydrofolate + glycine + H2O = (6S)-5,6,7,8-tetrahydrofolate + L-serine. Its pathway is one-carbon metabolism; tetrahydrofolate interconversion. The protein operates within amino-acid biosynthesis; glycine biosynthesis; glycine from L-serine: step 1/1. Functionally, catalyzes the reversible interconversion of serine and glycine with tetrahydrofolate (THF) serving as the one-carbon carrier. This reaction serves as the major source of one-carbon groups required for the biosynthesis of purines, thymidylate, methionine, and other important biomolecules. Also exhibits THF-independent aldolase activity toward beta-hydroxyamino acids, producing glycine and aldehydes, via a retro-aldol mechanism. This is Serine hydroxymethyltransferase from Bacteroides fragilis (strain ATCC 25285 / DSM 2151 / CCUG 4856 / JCM 11019 / LMG 10263 / NCTC 9343 / Onslow / VPI 2553 / EN-2).